We begin with the raw amino-acid sequence, 421 residues long: CinA-like protein (421 aa).

It belongs to the CinA family.

This chain is CinA-like protein, found in Mycobacterium sp. (strain MCS).